The sequence spans 563 residues: Arginine--tRNA ligase (563 aa).

A 'HIGH' region motif is present at residues 121–131 (PNIAKPFSIGH).

Belongs to the class-I aminoacyl-tRNA synthetase family. As to quaternary structure, monomer.

It localises to the cytoplasm. The catalysed reaction is tRNA(Arg) + L-arginine + ATP = L-arginyl-tRNA(Arg) + AMP + diphosphate. The sequence is that of Arginine--tRNA ligase from Streptococcus pyogenes serotype M3 (strain ATCC BAA-595 / MGAS315).